Here is a 100-residue protein sequence, read N- to C-terminus: RING finger protein Z (100 aa).

The N-myristoyl glycine; by host moiety is linked to residue Gly-2. Residues 43–79 (CRCCWFANTNLIKCSDHYICLKCLNIMLGKSSFCDIC) form an RING-type; atypical zinc finger. A PTAP/PSAP motif motif is present at residues 93–96 (PSAP).

The protein belongs to the arenaviridae Z protein family. Interacts with protein NP; this interaction probably directs the encapsidated genome to budding sites. Interacts (via RING domain) with polymerase L; this interaction inhibits viral transcription and replication, Z partially blocks the product exit tunnel for the releasing nascent RNA product. Interacts with the glycoprotein complex; this interaction plays a role in virion budding. Interacts with host eIF4E; this interaction results in eIF4E reduced affinity for its substrate, the 5'-m7 G cap structure. Interacts (via late-budding domain) with host TSG101; this interaction is essential for budding and release of viral particles. Interacts with host RPLP0; this interaction may serve to load ribosome-like particles inside the virion. Interacts with host PML; this interaction induces PML bodies redistribution in the cytoplasm upon viral infection. Post-translationally, myristoylation is required for the role of RING finger protein Z in assembly and budding.

Its subcellular location is the virion. It localises to the host cytoplasm. The protein localises to the host perinuclear region. The protein resides in the host cell membrane. Functionally, plays a crucial role in virion assembly and budding. Expressed late in the virus life cycle, it acts as an inhibitor of viral transcription and RNA synthesis by interacting with the viral polymerase L. Presumably recruits the NP encapsidated genome to cellular membranes at budding sites via direct interaction with NP. Plays critical roles in the final steps of viral release by interacting with host TSG101, a member of the vacuolar protein-sorting pathway and using other cellular host proteins involved in vesicle formation pathway. The budding of the virus progeny occurs after association of protein Z with the viral glycoprotein complex SSP-GP1-GP2 at the cell periphery, step that requires myristoylation of protein Z. Also selectively represses protein production by associating with host eIF4E. In cell-based minigenome assay, has an inhibitory effect on the ribonucleoprotein machinery (vRNP), which is responsible for the replication and transcription of the viral genome. The sequence is that of RING finger protein Z from Homo sapiens (Human).